Consider the following 411-residue polypeptide: Na(+)-translocating NADH-quinone reductase subunit F (411 aa).

A helical transmembrane segment spans residues 6 to 26 (AIGGVAMFTLIIMGLVAIILA). The region spanning 35 to 129 (GDVTIHINDN…DMKIEIDPEF (95 aa)) is the 2Fe-2S ferredoxin-type domain. Residues Cys-72, Cys-78, Cys-81, and Cys-113 each coordinate [2Fe-2S] cluster. One can recognise an FAD-binding FR-type domain in the interval 132–273 (VQKWECEVIS…SGPYGEFFAK (142 aa)).

The protein belongs to the NqrF family. Composed of six subunits; NqrA, NqrB, NqrC, NqrD, NqrE and NqrF. It depends on [2Fe-2S] cluster as a cofactor. Requires FAD as cofactor.

Its subcellular location is the cell inner membrane. The enzyme catalyses a ubiquinone + n Na(+)(in) + NADH + H(+) = a ubiquinol + n Na(+)(out) + NAD(+). Its function is as follows. NQR complex catalyzes the reduction of ubiquinone-1 to ubiquinol by two successive reactions, coupled with the transport of Na(+) ions from the cytoplasm to the periplasm. The first step is catalyzed by NqrF, which accepts electrons from NADH and reduces ubiquinone-1 to ubisemiquinone by a one-electron transfer pathway. This is Na(+)-translocating NADH-quinone reductase subunit F from Psychrobacter cryohalolentis (strain ATCC BAA-1226 / DSM 17306 / VKM B-2378 / K5).